A 758-amino-acid polypeptide reads, in one-letter code: 5-methyltetrahydropteroyltriglutamate--homocysteine methyltransferase (758 aa).

5-methyltetrahydropteroyltri-L-glutamate-binding positions include 17 to 20 (RELK) and Lys-117. L-homocysteine is bound by residues 434-436 (IGS) and Glu-487. Residues 434–436 (IGS) and Glu-487 each bind L-methionine. 5-methyltetrahydropteroyltri-L-glutamate is bound by residues 518 to 519 (RC) and Trp-564. Asp-602 contributes to the L-homocysteine binding site. Residue Asp-602 coordinates L-methionine. Glu-608 contributes to the 5-methyltetrahydropteroyltri-L-glutamate binding site. Zn(2+) is bound by residues His-644, Cys-646, and Glu-668. His-697 functions as the Proton donor in the catalytic mechanism. Cys-729 lines the Zn(2+) pocket.

This sequence belongs to the vitamin-B12 independent methionine synthase family. Zn(2+) serves as cofactor.

It catalyses the reaction 5-methyltetrahydropteroyltri-L-glutamate + L-homocysteine = tetrahydropteroyltri-L-glutamate + L-methionine. Its pathway is amino-acid biosynthesis; L-methionine biosynthesis via de novo pathway; L-methionine from L-homocysteine (MetE route): step 1/1. Functionally, catalyzes the transfer of a methyl group from 5-methyltetrahydrofolate to homocysteine resulting in methionine formation. This chain is 5-methyltetrahydropteroyltriglutamate--homocysteine methyltransferase, found in Yersinia enterocolitica serotype O:8 / biotype 1B (strain NCTC 13174 / 8081).